The sequence spans 755 residues: Cellulose synthase-like protein B4 (755 aa).

The next 2 helical transmembrane spans lie at 24 to 44 and 49 to 69; these read AVDL…ILHV and TVWI…LLIT. Active-site residues include aspartate 136 and aspartate 461. The next 6 membrane-spanning stretches (helical) occupy residues 533-556, 569-589, 615-635, 674-694, 702-722, and 733-753; these read AYLY…LPAY, VYLG…LWEF, LFSV…VFIV, FLPG…CLVG, GSGL…LPFL, and IPFS…VLSV.

Belongs to the glycosyltransferase 2 family. Plant cellulose synthase-like B subfamily.

Its subcellular location is the golgi apparatus membrane. Functionally, thought to be a Golgi-localized beta-glycan synthase that polymerize the backbones of noncellulosic polysaccharides (hemicelluloses) of plant cell wall. This Arabidopsis thaliana (Mouse-ear cress) protein is Cellulose synthase-like protein B4 (CSLB4).